We begin with the raw amino-acid sequence, 74 residues long: Conotoxin AbVIH (74 aa).

Positions 1–17 (VLIIAVLFLTACQLTTA) are cleaved as a signal peptide. Positions 18-40 (ETSSRGKQKHRALRSTDKDSRMT) are excised as a propeptide. The segment at 19 to 40 (TSSRGKQKHRALRSTDKDSRMT) is disordered. Intrachain disulfides connect C43–C57, C50–C61, and C56–C68.

It belongs to the conotoxin O1 superfamily. In terms of tissue distribution, expressed by the venom duct.

The protein localises to the secreted. The polypeptide is Conotoxin AbVIH (Conus abbreviatus (Abbreviated cone)).